Here is a 134-residue protein sequence, read N- to C-terminus: Alkaline proteinase inhibitor (134 aa).

Residues 1-26 (MVFAAWYLKFAFFVALAFSIIGGSMA) form the signal peptide. A disulfide bridge connects residues Cys50 and Cys73.

The protein belongs to the protease inhibitor I38 family.

The protein localises to the periplasm. Inhibitor of the alkaline protease. This Photorhabdus luminescens (Xenorhabdus luminescens) protein is Alkaline proteinase inhibitor (inh).